The sequence spans 444 residues: N-succinylarginine dihydrolase (444 aa).

Substrate is bound by residues 19–28, Asn-110, and 137–138; these read SGLSVGNIAS and HR. Glu-174 is a catalytic residue. Residue Arg-214 coordinates substrate. His-250 is an active-site residue. Substrate is bound by residues Asp-252 and Asn-362. Catalysis depends on Cys-368, which acts as the Nucleophile.

It belongs to the succinylarginine dihydrolase family. In terms of assembly, homodimer.

The enzyme catalyses N(2)-succinyl-L-arginine + 2 H2O + 2 H(+) = N(2)-succinyl-L-ornithine + 2 NH4(+) + CO2. The protein operates within amino-acid degradation; L-arginine degradation via AST pathway; L-glutamate and succinate from L-arginine: step 2/5. Catalyzes the hydrolysis of N(2)-succinylarginine into N(2)-succinylornithine, ammonia and CO(2). The polypeptide is N-succinylarginine dihydrolase (Aliivibrio fischeri (strain ATCC 700601 / ES114) (Vibrio fischeri)).